The following is a 160-amino-acid chain: Cyclic pyranopterin monophosphate synthase (160 aa).

Substrate is bound by residues 76-78 (MCH) and 113-114 (ME). The active site involves D128.

It belongs to the MoaC family. Homohexamer; trimer of dimers.

The enzyme catalyses (8S)-3',8-cyclo-7,8-dihydroguanosine 5'-triphosphate = cyclic pyranopterin phosphate + diphosphate. The protein operates within cofactor biosynthesis; molybdopterin biosynthesis. Its function is as follows. Catalyzes the conversion of (8S)-3',8-cyclo-7,8-dihydroguanosine 5'-triphosphate to cyclic pyranopterin monophosphate (cPMP). This Brevibacillus brevis (strain 47 / JCM 6285 / NBRC 100599) protein is Cyclic pyranopterin monophosphate synthase.